A 238-amino-acid chain; its full sequence is Ribonuclease PH (238 aa).

Residues R86 and 124–126 (GTR) contribute to the phosphate site.

It belongs to the RNase PH family. As to quaternary structure, homohexameric ring arranged as a trimer of dimers.

The enzyme catalyses tRNA(n+1) + phosphate = tRNA(n) + a ribonucleoside 5'-diphosphate. In terms of biological role, phosphorolytic 3'-5' exoribonuclease that plays an important role in tRNA 3'-end maturation. Removes nucleotide residues following the 3'-CCA terminus of tRNAs; can also add nucleotides to the ends of RNA molecules by using nucleoside diphosphates as substrates, but this may not be physiologically important. Probably plays a role in initiation of 16S rRNA degradation (leading to ribosome degradation) during starvation. This is Ribonuclease PH from Trichlorobacter lovleyi (strain ATCC BAA-1151 / DSM 17278 / SZ) (Geobacter lovleyi).